Here is a 188-residue protein sequence, read N- to C-terminus: Phosphoribosylglycinamide formyltransferase (188 aa).

12–14 (GSN) is a N(1)-(5-phospho-beta-D-ribosyl)glycinamide binding site. Residues K66, 91–94 (MRLV), and N108 contribute to the (6R)-10-formyltetrahydrofolate site. H110 serves as the catalytic Proton donor.

The protein belongs to the GART family.

The catalysed reaction is N(1)-(5-phospho-beta-D-ribosyl)glycinamide + (6R)-10-formyltetrahydrofolate = N(2)-formyl-N(1)-(5-phospho-beta-D-ribosyl)glycinamide + (6S)-5,6,7,8-tetrahydrofolate + H(+). It participates in purine metabolism; IMP biosynthesis via de novo pathway; N(2)-formyl-N(1)-(5-phospho-D-ribosyl)glycinamide from N(1)-(5-phospho-D-ribosyl)glycinamide (10-formyl THF route): step 1/1. Its function is as follows. Catalyzes the transfer of a formyl group from 10-formyltetrahydrofolate to 5-phospho-ribosyl-glycinamide (GAR), producing 5-phospho-ribosyl-N-formylglycinamide (FGAR) and tetrahydrofolate. This is Phosphoribosylglycinamide formyltransferase from Staphylococcus epidermidis (strain ATCC 35984 / DSM 28319 / BCRC 17069 / CCUG 31568 / BM 3577 / RP62A).